A 487-amino-acid chain; its full sequence is F-box/LRR-repeat protein At1g48400 (487 aa).

Residues 9 to 57 (RDSISNLPDEILGKILSLLPTKVAASTSVLSKRWRNLLGLVDNLCFDES) form the F-box domain. 6 LRR repeats span residues 71–97 (SLRF…SLSR), 125–153 (HLHA…TLSA), 174–199 (SILG…YMRD), 225–251 (THNP…DYSS), 327–358 (TLHL…SIES), and 359–384 (NKDK…VIKG).

The polypeptide is F-box/LRR-repeat protein At1g48400 (Arabidopsis thaliana (Mouse-ear cress)).